The primary structure comprises 239 residues: Ribosomal RNA small subunit methyltransferase G (239 aa).

Residues Gly-77, Phe-82, 128–129 (AE), and Arg-147 each bind S-adenosyl-L-methionine. Residues 219-239 (KNTPKKYPRKPGTPNKSPIEG) are disordered.

It belongs to the methyltransferase superfamily. RNA methyltransferase RsmG family.

The protein localises to the cytoplasm. Specifically methylates the N7 position of guanine in position 535 of 16S rRNA. The polypeptide is Ribosomal RNA small subunit methyltransferase G (Bacillus subtilis (strain 168)).